Consider the following 723-residue polypeptide: Phenylalanine ammonia-lyase (723 aa).

Y77 (proton donor/acceptor) is an active-site residue. Positions A182 to G184 form a cross-link, 5-imidazolinone (Ala-Gly). S183 bears the 2,3-didehydroalanine (Ser) mark. Residues N241, Q336, R342, N372, K443, E471, and N474 each contribute to the (E)-cinnamate site.

The protein belongs to the PAL/histidase family. Post-translationally, contains an active site 4-methylidene-imidazol-5-one (MIO), which is formed autocatalytically by cyclization and dehydration of residues Ala-Ser-Gly.

Its subcellular location is the cytoplasm. It catalyses the reaction L-phenylalanine = (E)-cinnamate + NH4(+). It participates in secondary metabolite biosynthesis. Its pathway is phenylpropanoid metabolism; trans-cinnamate biosynthesis; trans-cinnamate from L-phenylalanine: step 1/1. Its function is as follows. Phenylalanine ammonia-lyase; part of the gene cluster that mediates the biosynthesis of squalestatin S1 (SQS1, also known as zaragozic acid A), a heavily oxidized fungal polyketide that offers potent cholesterol lowering activity by targeting squalene synthase (SS). SQS1 is composed of a 2,8-dioxobicyclic[3.2.1]octane-3,4,5-tricarboxyclic acid core that is connected to two lipophilic polyketide arms. These initial steps feature the priming of an unusual benzoic acid starter unit onto the highly reducing polyketide synthase clz14, followed by oxaloacetate extension and product release to generate a tricarboxylic acid containing product. The phenylalanine ammonia lyase (PAL) clz10 and the acyl-CoA ligase clz12 are involved in transforming phenylalanine into benzoyl-CoA. The citrate synthase-like protein clz17 is involved in connecting the C-alpha-carbons of the hexaketide chain and oxaloacetate to afford the tricarboxylic acid unit. The potential hydrolytic enzymes, clz11 and clz13, are in close proximity to pks2 and may participate in product release. On the other side, the tetraketide arm is synthesized by a the squalestatin tetraketide synthase clz2 and enzymatically esterified to the core in the last biosynthetic step, by the acetyltransferase clz6. The biosynthesis of the tetraketide must involve 3 rounds of chain extension. After the first and second rounds methyl-transfer occurs, and in all rounds of extension the ketoreductase and dehydratase are active. The enoyl reductase and C-MeT of clz2 are not active in the final round of extension. The acetyltransferase clz6 appears to have a broad substrate selectivity for its acyl CoA substrate, allowing the in vitro synthesis of novel squalestatins. The biosynthesis of SQS1 requires several oxidative steps likely performed by oxidoreductases clz3, clz15 and clz16. Finally, in support of the identification of the cluster as being responsible for SQS1 production, the cluster contains a gene encoding a putative squalene synthase (SS) clz20, suggesting a likely mechanism for self-resistance. The polypeptide is Phenylalanine ammonia-lyase (Cochliobolus lunatus (Filamentous fungus)).